The sequence spans 303 residues: Probable cat1 operon transcriptional activator (303 aa).

The HTH lysR-type domain occupies 1 to 58 (MDLRQFRYFVAVARERNFTRAARQLNIAQPPLSRQIQLLEEEVGVPLLIRNSRPVQLT). The H-T-H motif DNA-binding region spans 18–37 (FTRAARQLNIAQPPLSRQIQ).

This sequence belongs to the LysR transcriptional regulatory family.

Probable positive regulator of the cat1 operon which encode enzymes responsible for the degradation of catechol to acetyl-CoA via the beta-ketoadipate pathway. The sequence is that of Probable cat1 operon transcriptional activator from Acinetobacter lwoffii.